We begin with the raw amino-acid sequence, 67 residues long: Large ribosomal subunit protein uL29 (67 aa).

Belongs to the universal ribosomal protein uL29 family.

This chain is Large ribosomal subunit protein uL29, found in Rubrobacter xylanophilus (strain DSM 9941 / JCM 11954 / NBRC 16129 / PRD-1).